Consider the following 216-residue polypeptide: Major fimbrial subunit (216 aa).

The signal sequence occupies residues 1–20; the sequence is MKKTLLGSLILLAFAGNVQA. An intrachain disulfide couples C41 to C81.

This sequence belongs to the fimbrial protein family.

The protein localises to the fimbrium. Functionally, mediates adherence to oropharyngeal epithelial cells. Helps the airway colonization process. This Haemophilus influenzae protein is Major fimbrial subunit (hifA).